The following is a 109-amino-acid chain: Protein reprimo (109 aa).

N-linked (GlcNAc...) asparagine glycosylation is found at asparagine 7 and asparagine 18. A helical transmembrane segment spans residues 56–76 (VVQIAVMCVLSLTVVFGIFFL). Residue serine 98 is modified to Phosphoserine.

Belongs to the reprimo family.

It localises to the cytoplasm. The protein localises to the membrane. In terms of biological role, may be involved in the regulation of p53-dependent G2 arrest of the cell cycle. Seems to induce cell cycle arrest by inhibiting CDK1 activity and nuclear translocation of the CDC2 cyclin B1 complex. The protein is Protein reprimo (Rprm) of Mus musculus (Mouse).